Consider the following 400-residue polypeptide: GTPase Obg (400 aa).

The region spanning 1 to 159 is the Obg domain; that stretch reads MKFVDEVQIR…RTLKLELLLL (159 aa). An OBG-type G domain is found at 160–333; sequence ADVGMLGLPN…VCYDILDLLD (174 aa). GTP contacts are provided by residues 166–173, 191–195, 213–216, 283–286, and 314–316; these read GLPNAGKS, FTTLV, DIPG, NKMD, and SAI. Residues serine 173 and threonine 193 each coordinate Mg(2+).

Belongs to the TRAFAC class OBG-HflX-like GTPase superfamily. OBG GTPase family. Monomer. Requires Mg(2+) as cofactor.

Its subcellular location is the cytoplasm. Functionally, an essential GTPase which binds GTP, GDP and possibly (p)ppGpp with moderate affinity, with high nucleotide exchange rates and a fairly low GTP hydrolysis rate. Plays a role in control of the cell cycle, stress response, ribosome biogenesis and in those bacteria that undergo differentiation, in morphogenesis control. In Aeromonas salmonicida (strain A449), this protein is GTPase Obg.